Here is a 105-residue protein sequence, read N- to C-terminus: Nucleoid-associated protein Ccur92_18190 (105 aa).

This sequence belongs to the YbaB/EbfC family. As to quaternary structure, homodimer.

It localises to the cytoplasm. Its subcellular location is the nucleoid. Binds to DNA and alters its conformation. May be involved in regulation of gene expression, nucleoid organization and DNA protection. This Campylobacter curvus (strain 525.92) protein is Nucleoid-associated protein Ccur92_18190.